The chain runs to 600 residues: Adenine deaminase 4 (600 aa).

The protein belongs to the metallo-dependent hydrolases superfamily. Adenine deaminase family. The cofactor is Mn(2+).

It catalyses the reaction adenine + H2O + H(+) = hypoxanthine + NH4(+). The chain is Adenine deaminase 4 from Rhizobium meliloti (strain 1021) (Ensifer meliloti).